A 268-amino-acid polypeptide reads, in one-letter code: Zinc transporter ZupT (268 aa).

8 consecutive transmembrane segments (helical) span residues Ile5 to Ile25, Thr38 to Val58, Ala72 to Asp92, Met124 to Phe144, Thr152 to Val172, Phe187 to Leu207, Leu211 to Ile231, and Leu248 to Leu268. Residues Asn136 and Glu139 each contribute to the Fe(2+) site. Positions 139 and 164 each coordinate Zn(2+). Residues Asn165, Glu168, and Glu197 each coordinate Fe(2+). Glu168 lines the Zn(2+) pocket.

The protein belongs to the ZIP transporter (TC 2.A.5) family. ZupT subfamily.

The protein localises to the cell inner membrane. The catalysed reaction is Zn(2+)(in) = Zn(2+)(out). In terms of biological role, mediates zinc uptake. May also transport other divalent cations. The polypeptide is Zinc transporter ZupT (Chlorobaculum parvum (strain DSM 263 / NCIMB 8327) (Chlorobium vibrioforme subsp. thiosulfatophilum)).